We begin with the raw amino-acid sequence, 427 residues long: Flotillin-1 (427 aa).

3 positions are modified to phosphoserine: Ser-19, Ser-163, and Ser-385. Thr-387 is subject to Phosphothreonine.

This sequence belongs to the band 7/mec-2 family. Flotillin subfamily. Heterooligomeric complex of flotillin-1 and flotillin-2 and caveolin-1 and caveolin-2. Interacts with ECPAS.

It localises to the cell membrane. The protein resides in the endosome. The protein localises to the membrane. It is found in the caveola. Its subcellular location is the melanosome. It localises to the membrane raft. Its function is as follows. May act as a scaffolding protein within caveolar membranes, functionally participating in formation of caveolae or caveolae-like vesicles. The polypeptide is Flotillin-1 (FLOT1) (Homo sapiens (Human)).